The following is a 276-amino-acid chain: Diaminopimelate epimerase (276 aa).

Residues N13, Q46, and N66 each coordinate substrate. C75 functions as the Proton donor in the catalytic mechanism. Substrate-binding positions include 76 to 77 (GN), N159, N192, and 210 to 211 (ER). The Proton acceptor role is filled by C219. A substrate-binding site is contributed by 220 to 221 (GT).

This sequence belongs to the diaminopimelate epimerase family. As to quaternary structure, homodimer.

The protein localises to the cytoplasm. It catalyses the reaction (2S,6S)-2,6-diaminopimelate = meso-2,6-diaminopimelate. Its pathway is amino-acid biosynthesis; L-lysine biosynthesis via DAP pathway; DL-2,6-diaminopimelate from LL-2,6-diaminopimelate: step 1/1. Functionally, catalyzes the stereoinversion of LL-2,6-diaminopimelate (L,L-DAP) to meso-diaminopimelate (meso-DAP), a precursor of L-lysine and an essential component of the bacterial peptidoglycan. This chain is Diaminopimelate epimerase, found in Tolumonas auensis (strain DSM 9187 / NBRC 110442 / TA 4).